Consider the following 390-residue polypeptide: Aspergillopepsin-1 (390 aa).

The signal sequence occupies residues 1–19 (MVNTSLLAALTAYAVAVAA). The propeptide at 20-67 (APTAPQVKGFSVNQVAVPKGVYRHPAAQLAKAYGKYHATVPTQVAAAA) is activation peptide. Residues 84-387 (YITQVTVGDD…DASGPRLGFA (304 aa)) enclose the Peptidase A1 domain. Residues Asp100 and Asp281 contribute to the active site.

This sequence belongs to the peptidase A1 family. Monomer.

The protein localises to the secreted. The enzyme catalyses Hydrolysis of proteins with broad specificity. Generally favors hydrophobic residues in P1 and P1', but also accepts Lys in P1, which leads to activation of trypsinogen. Does not clot milk.. Inhibited by the microbial peptide pepstatin A. Its function is as follows. Secreted aspartic endopeptidase that allows assimilation of proteinaceous substrates. The scissile peptide bond is attacked by a nucleophilic water molecule activated by two aspartic residues in the active site. Shows a broad primary substrate specificity. Favors hydrophobic residues at the P1 and P1' positions, but also accepts a lysine residue in the P1 position, leading to the activation of trypsinogen and chymotrypsinogen A. Hydrolyzes myoglobin, hemoglobin and other natural proteins. Hydrolyzes equine myoglobin between positions 'Met-1' and 'Gly-2', 'Lys-43' and 'Phe-44', and 'Leu-70' and 'Thr-71'. This Aspergillus pseudoglaucus (Eurotium repens) protein is Aspergillopepsin-1 (pepA).